Reading from the N-terminus, the 190-residue chain is dITP/XTP pyrophosphatase (190 aa).

7 to 12 (SNNKNK) lines the substrate pocket. Asp68 (proton acceptor) is an active-site residue. Asp68 is a binding site for Mg(2+). Substrate contacts are provided by residues Thr69, 148–151 (FGYD), Lys171, and 176–177 (HR).

It belongs to the HAM1 NTPase family. In terms of assembly, homodimer. It depends on Mg(2+) as a cofactor.

It catalyses the reaction XTP + H2O = XMP + diphosphate + H(+). The catalysed reaction is dITP + H2O = dIMP + diphosphate + H(+). It carries out the reaction ITP + H2O = IMP + diphosphate + H(+). Functionally, pyrophosphatase that catalyzes the hydrolysis of nucleoside triphosphates to their monophosphate derivatives, with a high preference for the non-canonical purine nucleotides XTP (xanthosine triphosphate), dITP (deoxyinosine triphosphate) and ITP. Seems to function as a house-cleaning enzyme that removes non-canonical purine nucleotides from the nucleotide pool, thus preventing their incorporation into DNA/RNA and avoiding chromosomal lesions. In Flavobacterium psychrophilum (strain ATCC 49511 / DSM 21280 / CIP 103535 / JIP02/86), this protein is dITP/XTP pyrophosphatase.